A 270-amino-acid polypeptide reads, in one-letter code: Plasmanylethanolamine desaturase 1 (270 aa).

3 helical membrane passes run 47–67 (WCSVILCFSLIAHNLVHLLLL), 74–94 (PLVILGVVAGALIADFLSGLV), and 161–181 (ALEQLYPWECFVFCLIIFGTF). The Histidine box-1 signature appears at 186–190 (HKWSH). Residues 213 to 217 (HHRIH) carry the Histidine box-2 motif.

Belongs to the fatty acid desaturase CarF family.

It localises to the endoplasmic reticulum membrane. The catalysed reaction is a 1-(1,2-saturated alkyl)-2-acyl-sn-glycero-3-phosphoethanolamine + 2 Fe(II)-[cytochrome b5] + O2 + 2 H(+) = a 1-O-(1Z-alkenyl)-2-acyl-sn-glycero-3-phosphoethanolamine + 2 Fe(III)-[cytochrome b5] + 2 H2O. The enzyme catalyses a 1-O-hexadecyl-2-acyl-sn-glycero-3-phosphoethanolamine + 2 Fe(II)-[cytochrome b5] + O2 + 2 H(+) = a 1-O-(1Z-hexadecenyl)-2-acyl-sn-glycero-3-phosphoethanolamine + 2 Fe(III)-[cytochrome b5] + 2 H2O. It carries out the reaction a 1-O-octadecyl-2-acyl-sn-glycero-3-phosphoethanolamine + 2 Fe(II)-[cytochrome b5] + O2 + 2 H(+) = a 1-O-(1Z-octadecenyl)-2-acyl-sn-glycero-3-phosphoethanolamine + 2 Fe(III)-[cytochrome b5] + 2 H2O. It catalyses the reaction a 1-O-(9Z-octadecenyl)-2-acyl-sn-glycero-3-phosphoethanolamine + 2 Fe(II)-[cytochrome b5] + O2 + 2 H(+) = a 1-O-(1Z,9Z-octadecadienyl)-2-acyl-sn-glycero-3-phosphoethanolamine + 2 Fe(III)-[cytochrome b5] + 2 H2O. It participates in lipid metabolism; fatty acid metabolism. Plasmanylethanolamine desaturase involved in plasmalogen biogenesis in the endoplasmic reticulum membrane. Plasmalogens are glycerophospholipids with a hydrocarbon chain linked by a vinyl ether bond at the glycerol sn-1 position, and are involved in antioxidative and signaling mechanisms. This is Plasmanylethanolamine desaturase 1 from Homo sapiens (Human).